Consider the following 761-residue polypeptide: MKKNLFVTKRDGRKEKINLDKIHKVLNWASEGLDDVSVSQVELCSRIQFYNNITTINIHETIIKAAADLISQDTPDYQYMAARLAIFHLRKKAYGQFEPPKLYDHVKKMVDLEKYDENLLKNYSYKEFLQMNSFIDHWRDMNFSYAAVKQLEGKYLIQNRVNGKIYESAQFLYILISACLFSQYPKNVRMNYIHRFYNAISTFKISLPTPIMSGVRTPTRQFSSCVLIECGDSLNSINATTSSIVKYVSQRAGIGVNAGQIRALGSPIRNGEAFHTGCIPFYKHFQSAVKSCSQGGVRGGAATIFYPIWHLEVESLLVLKNNRGIEENRVRHIDYAIQINKLMYQRMLSGDQITLFSPSDVPDLYKAFFSDQKKFKKIYLQYEKNKNIRKKTIKALDLFSLMMQERTSTGRIYVQNVDHCNLHSAFNPELSPIRQSNLCLEITLPTKSLNDVHDTDGEIALCTLSAFNLGKIKSLDDFKELSILSVRALDEILDYQNYPVLAAKKSAISRRSLGIGVINFAYYLAKNKVRYSDGSAHNLTHKTFEAMQYYLLEASCELAKEKGACSLFNHTNYYLGKLPIDTYKKYIDDICNEPLHLDWNLLRSKIKKYGLRNSTLSALMPSETSSQISNATNGIEPPRGFISIKVSKDGILRQVVPEYKKLRLQYELLWDIPNNTGYLQLAGIMQKFIDQSISVNTHYDPARFLNNKIPMKQLLYDLLLSYKLGLKTLYYQNTRDGSEDDQNITSKSITEDICESGSCIL.

The region spanning 5–95 (LFVTKRDGRK…IFHLRKKAYG (91 aa)) is the ATP-cone domain. ATP is bound by residues K9, 15-21 (EKINLDK), T55, and K91. Residue T209 participates in GDP binding. C225 and C462 are disulfide-bonded. DTTP is bound by residues 232 to 234 (DSL), R262, and R269. N437 is a binding site for GDP. The active-site Proton acceptor is N437. C439 (cysteine radical intermediate) is an active-site residue. Residues E441 and 623 to 625 (ETS) each bind GDP. E441 (proton acceptor) is an active-site residue.

Belongs to the ribonucleoside diphosphate reductase large chain family. In terms of assembly, tetramer of two alpha and two beta subunits.

The catalysed reaction is a 2'-deoxyribonucleoside 5'-diphosphate + [thioredoxin]-disulfide + H2O = a ribonucleoside 5'-diphosphate + [thioredoxin]-dithiol. Under complex allosteric control mediated by deoxynucleoside triphosphates and ATP binding to separate specificity and activation sites on the alpha subunit. The type of nucleotide bound at the specificity site determines substrate preference. It seems probable that ATP makes the enzyme reduce CDP and UDP, dGTP favors ADP reduction and dTTP favors GDP reduction. Stimulated by ATP and inhibited by dATP binding to the activity site. Functionally, provides the precursors necessary for DNA synthesis. Catalyzes the biosynthesis of deoxyribonucleotides from the corresponding ribonucleotides. The polypeptide is Ribonucleoside-diphosphate reductase subunit alpha (nrdA) (Buchnera aphidicola subsp. Acyrthosiphon pisum (strain APS) (Acyrthosiphon pisum symbiotic bacterium)).